The sequence spans 258 residues: Phosphate import ATP-binding protein PstB (258 aa).

The ABC transporter domain occupies 5-247 (LDLKGVNIYY…EKIFSNPTEK (243 aa)). 37–44 (GASGCGKT) is an ATP binding site.

The protein belongs to the ABC transporter superfamily. Phosphate importer (TC 3.A.1.7) family. The complex is composed of two ATP-binding proteins (PstB), two transmembrane proteins (PstC and PstA) and a solute-binding protein (PstS).

The protein localises to the cell membrane. It carries out the reaction phosphate(out) + ATP + H2O = ADP + 2 phosphate(in) + H(+). Part of the ABC transporter complex PstSACB involved in phosphate import. Responsible for energy coupling to the transport system. The polypeptide is Phosphate import ATP-binding protein PstB (Mycobacterium leprae (strain TN)).